Here is a 142-residue protein sequence, read N- to C-terminus: Hemoglobin subunit alpha (142 aa).

A Globin domain is found at 2 to 142 (VLSAADKSNV…VGTVLTSKYR (141 aa)). Ser-4 carries the post-translational modification Phosphoserine. An N6-succinyllysine mark is found at Lys-8 and Lys-12. Lys-17 is modified (N6-acetyllysine; alternate). Lys-17 bears the N6-succinyllysine; alternate mark. Tyr-25 is subject to Phosphotyrosine. Ser-36 carries the post-translational modification Phosphoserine. The residue at position 41 (Lys-41) is an N6-succinyllysine. Ser-50 is subject to Phosphoserine. His-59 lines the O2 pocket. Heme b is bound at residue His-88. Residue Ser-103 is modified to Phosphoserine. At Thr-109 the chain carries Phosphothreonine. 2 positions are modified to phosphoserine: Ser-125 and Ser-132. Phosphothreonine is present on residues Thr-135 and Thr-138. Ser-139 carries the post-translational modification Phosphoserine.

This sequence belongs to the globin family. In terms of assembly, heterotetramer of two alpha chains and two beta chains. In terms of tissue distribution, red blood cells.

Involved in oxygen transport from the lung to the various peripheral tissues. Functionally, hemopressin acts as an antagonist peptide of the cannabinoid receptor CNR1. Hemopressin-binding efficiently blocks cannabinoid receptor CNR1 and subsequent signaling. This is Hemoglobin subunit alpha (HBA) from Pantholops hodgsonii (Chiru).